We begin with the raw amino-acid sequence, 512 residues long: uncharacterized protein (512 aa).

The next 2 membrane-spanning stretches (helical) occupy residues 20 to 40 (IFPVFMVMIIGLISFYAIYIW) and 222 to 242 (GIALLVVMGVVLILLVIFGYI). Residues 297-512 (EQLIQSIEQT…TLMCYQIPLV (216 aa)) enclose the Histidine kinase domain. A Phosphohistidine; by autocatalysis modification is found at H325.

Autophosphorylated.

It localises to the cell membrane. It carries out the reaction ATP + protein L-histidine = ADP + protein N-phospho-L-histidine.. Probable member of the two-component regulatory system SE_0166/SE_0165. May activate SE_0165 by phosphorylation. This is an uncharacterized protein from Staphylococcus epidermidis (strain ATCC 12228 / FDA PCI 1200).